The following is a 369-amino-acid chain: Probable serine/threonine-protein kinase FMP48 (369 aa).

Residues 2 to 369 (YTKLRSIQSG…EKPCLIQDGK (368 aa)) form the Protein kinase domain. Residues 8–16 (IQSGTFSTV) and lysine 31 each bind ATP. Aspartate 133 (proton acceptor) is an active-site residue.

Belongs to the protein kinase superfamily. Ser/Thr protein kinase family.

The protein resides in the mitochondrion. It catalyses the reaction L-seryl-[protein] + ATP = O-phospho-L-seryl-[protein] + ADP + H(+). The enzyme catalyses L-threonyl-[protein] + ATP = O-phospho-L-threonyl-[protein] + ADP + H(+). The polypeptide is Probable serine/threonine-protein kinase FMP48 (FMP48) (Saccharomyces cerevisiae (strain ATCC 204508 / S288c) (Baker's yeast)).